Here is a 170-residue protein sequence, read N- to C-terminus: Putative 3-methyladenine DNA glycosylase (170 aa).

The protein belongs to the DNA glycosylase MPG family.

This Sodalis glossinidius protein is Putative 3-methyladenine DNA glycosylase.